Reading from the N-terminus, the 438-residue chain is Na(+)/H(+) antiporter NhaA (438 aa).

Transmembrane regions (helical) follow at residues 23–43 (FGGI…NSFL), 62–82 (FFIG…LFFL), 104–124 (SFPV…YFFL), 133–153 (GFGI…MLLG), 162–182 (VFLI…IALF), 185–205 (TNLK…LAVL), 221–241 (VLLW…AVIL), 302–322 (FLAP…NAGV), 337–357 (LGVI…ITFI), 372–392 (WWHI…SMFI), and 410–430 (IAIL…LFAL).

It belongs to the NhaA Na(+)/H(+) (TC 2.A.33) antiporter family.

Its subcellular location is the cell inner membrane. It catalyses the reaction Na(+)(in) + 2 H(+)(out) = Na(+)(out) + 2 H(+)(in). In terms of biological role, na(+)/H(+) antiporter that extrudes sodium in exchange for external protons. The sequence is that of Na(+)/H(+) antiporter NhaA from Helicobacter pylori (strain HPAG1).